Here is a 114-residue protein sequence, read N- to C-terminus: UPF0102 protein Shew_0226 (114 aa).

The protein belongs to the UPF0102 family.

The polypeptide is UPF0102 protein Shew_0226 (Shewanella loihica (strain ATCC BAA-1088 / PV-4)).